Consider the following 61-residue polypeptide: uncharacterized protein (61 aa).

This is an uncharacterized protein from Dictyostelium discoideum (Social amoeba).